The following is a 150-amino-acid chain: MDIHAIVKQLPHRYPFLLVDKVIELERNTRIKAIKNVTCNEPYFMGHFPGRPVMPGVLILEALAQAAGLLAFDAMGKVPDENNLYYLVGIDGARFKRPVEPGDQLILAITIDRVRGGIWKFKGLASVGDEVACEAELMCTMRSVGEPDRS.

His47 is a catalytic residue.

This sequence belongs to the thioester dehydratase family. FabZ subfamily.

It is found in the cytoplasm. It carries out the reaction a (3R)-hydroxyacyl-[ACP] = a (2E)-enoyl-[ACP] + H2O. Its function is as follows. Involved in unsaturated fatty acids biosynthesis. Catalyzes the dehydration of short chain beta-hydroxyacyl-ACPs and long chain saturated and unsaturated beta-hydroxyacyl-ACPs. The polypeptide is 3-hydroxyacyl-[acyl-carrier-protein] dehydratase FabZ (Verminephrobacter eiseniae (strain EF01-2)).